The following is a 143-amino-acid chain: Transcriptional regulator MraZ (143 aa).

SpoVT-AbrB domains are found at residues 5 to 47 (EFDH…TLEE) and 76 to 119 (AVEV…DRET).

Belongs to the MraZ family. In terms of assembly, forms oligomers.

It localises to the cytoplasm. The protein localises to the nucleoid. The chain is Transcriptional regulator MraZ from Staphylococcus epidermidis (strain ATCC 35984 / DSM 28319 / BCRC 17069 / CCUG 31568 / BM 3577 / RP62A).